Consider the following 372-residue polypeptide: Cytochrome b (372 aa).

4 consecutive transmembrane segments (helical) span residues 29–49 (FGSMLGLIYSIQIISGLILSW), 73–95 (WFIRFIHSSGVSLFMFIMYLHIL), 108–128 (VWYSGILLLFICMGSAFLGYV), and 174–194 (FFSFHYLLSLFIMVFILIHLI). Residues histidine 79 and histidine 93 each contribute to the heme b site. Heme b is bound by residues histidine 178 and histidine 192. Histidine 197 provides a ligand contact to a ubiquinone. The next 4 helical transmembrane spans lie at 220-240 (FSLKDTLVFVLVVFLYWFCIF), 284-301 (LGGVILMVMAILMLVFLG), 311-336 (MVKTLYWKLMLSSFLLVFIILTIMGG), and 344-363 (DILGNVNSVLYFFIYVIMLL).

This sequence belongs to the cytochrome b family. As to quaternary structure, the main subunits of complex b-c1 are: cytochrome b, cytochrome c1 and the Rieske protein. It depends on heme b as a cofactor.

It localises to the mitochondrion inner membrane. Its function is as follows. Component of the ubiquinol-cytochrome c reductase complex (complex III or cytochrome b-c1 complex) that is part of the mitochondrial respiratory chain. The b-c1 complex mediates electron transfer from ubiquinol to cytochrome c. Contributes to the generation of a proton gradient across the mitochondrial membrane that is then used for ATP synthesis. This is Cytochrome b (mt:Cyt-b) from Leptorhynchoides thecatus (Thorny-headed worm).